We begin with the raw amino-acid sequence, 453 residues long: Autophagy-related protein 21 (453 aa).

Residues 4–137 (LRFNQDASCC…NDQIFIYDIS (134 aa)) form a WD 1 repeat. The tract at residues 177–207 (GNELDRIRSKSNNNNDQTNSDNGRSRTYSIN) is disordered. Residues 187 to 198 (SNNNNDQTNSDN) show a composition bias toward low complexity. WD repeat units follow at residues 252–347 (NLKP…RTDD) and 419–453 (FDNKIYVASDDGSFKTYTIPSKHGQCVLNKTSHFI). A L/FRRG motif motif is present at residues 310–314 (FRRGS).

The protein belongs to the WD repeat PROPPIN family.

Its subcellular location is the cytoplasm. It is found in the membrane. It localises to the vacuole membrane. Functionally, required for cytoplasm to vacuole transport (Cvt) vesicles formation and mitophagy. Involved in binding of phosphatidylethanolamine to ATG8 and in recruitment of ATG8 and ATG5 to the pre-autophagosomal structure. Protects ATG8 from ARG4-mediated cleavage. This chain is Autophagy-related protein 21 (ATG21), found in Candida glabrata (strain ATCC 2001 / BCRC 20586 / JCM 3761 / NBRC 0622 / NRRL Y-65 / CBS 138) (Yeast).